The chain runs to 125 residues: Cu-Zn superoxide dismutase-like protein (125 aa).

A disulfide bridge connects residues C52 and C102.

It belongs to the Cu-Zn superoxide dismutase family.

It localises to the host cytoplasm. Virion protein with no enzymatic activity. This is Cu-Zn superoxide dismutase-like protein from Camelpox virus (strain M-96).